The primary structure comprises 57 residues: Large ribosomal subunit protein bL32 (57 aa).

Residues 1-19 are compositionally biased toward basic residues; that stretch reads MATPKRRMSRANTRSRRSQ. The disordered stretch occupies residues 1–20; it reads MATPKRRMSRANTRSRRSQW.

It belongs to the bacterial ribosomal protein bL32 family.

This chain is Large ribosomal subunit protein bL32, found in Mycobacterium marinum (strain ATCC BAA-535 / M).